Here is a 308-residue protein sequence, read N- to C-terminus: Baculoviral IAP repeat-containing protein bir-2 (308 aa).

BIR repeat units lie at residues R27–M98 and R170–K241. 8 residues coordinate Zn(2+): C68, C71, H87, C94, C211, C214, H230, and C237.

Belongs to the IAP family.

This Caenorhabditis elegans protein is Baculoviral IAP repeat-containing protein bir-2.